Here is a 181-residue protein sequence, read N- to C-terminus: Large ribosomal subunit protein uL5 (181 aa).

Belongs to the universal ribosomal protein uL5 family. As to quaternary structure, part of the 50S ribosomal subunit; part of the 5S rRNA/L5/L18/L25 subcomplex. Contacts the 5S rRNA and the P site tRNA. Forms a bridge to the 30S subunit in the 70S ribosome.

Functionally, this is one of the proteins that bind and probably mediate the attachment of the 5S RNA into the large ribosomal subunit, where it forms part of the central protuberance. In the 70S ribosome it contacts protein S13 of the 30S subunit (bridge B1b), connecting the 2 subunits; this bridge is implicated in subunit movement. Contacts the P site tRNA; the 5S rRNA and some of its associated proteins might help stabilize positioning of ribosome-bound tRNAs. The sequence is that of Large ribosomal subunit protein uL5 from Campylobacter jejuni subsp. doylei (strain ATCC BAA-1458 / RM4099 / 269.97).